The sequence spans 149 residues: Alpha-crystallin A chain (149 aa).

Positions 28-138 (LLRGFMDSGI…SHSERPIPVS (111 aa)) constitute a sHSP domain. Zn(2+) is bound by residues His-55, His-76, Glu-78, His-83, His-91, and His-130. Residues 125-149 (NLVSSHSERPIPVSREEKPTSAPSS) form a disordered region. The segment covering 130 to 143 (HSERPIPVSREEKP) has biased composition (basic and acidic residues). O-linked (GlcNAc) serine glycosylation occurs at Ser-138.

It belongs to the small heat shock protein (HSP20) family. Heteropolymer composed of three CRYAA and one CRYAB subunits. Inter-subunit bridging via zinc ions enhances stability, which is crucial as there is no protein turn over in the lens. Can also form homodimers and homotetramers (dimers of dimers) which serve as the building blocks of homooligomers. Within homooligomers, the zinc-binding motif is created from residues of 3 different molecules. His-76 and Glu-78 from one molecule are ligands of the zinc ion, and His-83 and His-130 residues from additional molecules complete the site with tetrahedral coordination geometry.

Its subcellular location is the cytoplasm. The protein localises to the nucleus. Contributes to the transparency and refractive index of the lens. May act as a chaperone, preventing aggregation of various proteins under a wide range of stress conditions. This Rana temporaria (European common frog) protein is Alpha-crystallin A chain (CRYAA).